We begin with the raw amino-acid sequence, 1574 residues long: MEIYGFSPLSFQDTESWKNSAFAACRGCKTYPIEEVGTDGSVRIRELPVGLVLKGVMAQYRSILWTQFVADPATTTVDRKSFDFWLFCRRAEAAQERAFRARQSKRAAKAAALDAEGLIDRSYKGRTYKVSVRGLSWKSVRAAQKAARKAAKNFGFTISENPFSALPSEGRSAFSAGETPAPPACALPNICWAARRASAKSASPADVESLPFLGLLPESPRLRNEGLLSLLRAKLADFKAARAPLVPIAKRVVKTPSEDSIWESVEKNAPIVGCVINGMVGIPKNPIIQRLLPERKYIARKCVRAFVPQVMCSSRHKHDFAQLRNPDKWIVFPSVIRISTVDAYATARRLGLINDCSSALERVKAFSSHHLDLEKEVSRLEREACAAPRKTIVARVFKFFFEEYALAYDEVVERLRAAKEDRRREHLAFLRNIKRQAHELELKERQSFLVAIEEARIKSLELKAKIEEGPPPQILYTPEWHVVQRAKAYADVTMSPSERDIAHLAYENKYVNARAYPNTDVAAKFRARCDAHFERIFGYAVHRGTRTETLTQVAESPPPIITAPVGQRVGGNPPTETPGAAAVRAAMRRAVERNRPGPGESSAMPAREPLLSHRGQYYARSLSDRYNNICSRNNAYDLMRETDVPIMEFTFGQQQDIAIPLSSRFGNHQSLHVGELEIAVQSSVLTGVDTAMAIMVSDASHDRLEEGFLSLTILRLGAGWMRHTIPIGITVFPTDPLVDRFLRLSVLTGGSPMADGRQVARLHYGLLGQAYTGAGEQRLTQYATRRINVRQTHVTQFLEGNHIHIARSEDRQQPLPHMSLEFRPLSGSTRYVARPGGYQAIESGRQSVDITQNFIRMPTHLTRSATDREETPAPNNPNEQNVGRSEINAEIPTNSAEEEERRRRTPHGSAIHRGYTEFSERNENLIEHLYVPSMHGLSLKEDIHLFTKNLEIPSTADFCKELARYSGLTEAMSYRGASYYSRLLSGVAILRPHFKFTFRLVTPILESIPLFVVWDDLGQLNTKVSLLSSAFQVIDSDHTRAAVYEVRPSGPTDLLTPSKANYGVGGDLVIFSGGYGSLSLSSPLRLKIEACLLKDTSLGSGEIALPQGPSSMLSFHYLNEVDLGDVNMHIFLGSCKYKSSSTVGGRKYISVCPAAGLVHKGGKAAYLGLGASLFSLYNFWKGSYVLKVDVLSKGSCAGAISIYIPPPGSSADHYSQSQLDTLPRYELPWRGSGSARFEVENFSWIGWHLTKPQRYITNEDWFSLNAGLLVVLNQPPTTRTGGSSDIRVIFRIVKFKNLTLKERSTTCDIFAGIKDSEYTDPLVDVLDENITAPSASSLTTVQDPDLGLETTSSAQTSGLTTTRSFGAYYAYLLGGESAGNRWHSYVLPITMGHHREMIGASKTGYLNTQLDETIRIRYSLRNPLHILCSAGAYYAVDLLFTLVVDGDHGAERAYTQLGLIQTPLMEYFDGYSASRNLSSEGGYSNQLGVGKSYVQLIVPRRNYRARSITTNTGALFFETIGSLTVKFAVSAKIKGVHLYVEPVGPIDVDGYGRGADISLTNENFVLMPSLRTAA.

Residues 361-422 (ERVKAFSSHH…ERLRAAKEDR (62 aa)) adopt a coiled-coil conformation. 2 disordered regions span residues 557–579 (PPPIITAPVGQRVGGNPPTETPG) and 863–916 (RSAT…RGYT).

Specific enzymatic cleavages by RNA1 encoded picornain 3C-like protease in vivo yield mature proteins.

The protein resides in the host cell junction. The protein localises to the host plasmodesma. Its subcellular location is the virion. Transports viral genome to neighboring plant cells directly through plasmosdesmata, without any budding. The movement protein allows efficient cell to cell propagation, by bypassing the host cell wall barrier. Acts by forming a tubular structure at the host plasmodesmata, enlarging it enough to allow free passage of virion capsids. Functionally, capsid proteins form a capsid enclosing the viral positive strand RNA genome. Together they form an icosahedral capsid pseudo T=3 with a diameter of approximately 30 nm (Potential). The polypeptide is RNA2 polyprotein (Citrus unshiu (Satsuma mandarin)).